The sequence spans 258 residues: Tryptophan synthase alpha chain (258 aa).

Residues Glu-47 and Asp-58 each act as proton acceptor in the active site.

Belongs to the TrpA family. In terms of assembly, tetramer of two alpha and two beta chains.

The catalysed reaction is (1S,2R)-1-C-(indol-3-yl)glycerol 3-phosphate + L-serine = D-glyceraldehyde 3-phosphate + L-tryptophan + H2O. It participates in amino-acid biosynthesis; L-tryptophan biosynthesis; L-tryptophan from chorismate: step 5/5. Its function is as follows. The alpha subunit is responsible for the aldol cleavage of indoleglycerol phosphate to indole and glyceraldehyde 3-phosphate. The polypeptide is Tryptophan synthase alpha chain (Bacillus thuringiensis subsp. konkukian (strain 97-27)).